Consider the following 201-residue polypeptide: Recombination protein RecR (201 aa).

Residues 57 to 74 (CRICGNITENSVNPCAIC) form a C4-type zinc finger. A Toprim domain is found at 82-178 (STVFVVENSR…KVTRLAHGLA (97 aa)).

This sequence belongs to the RecR family.

May play a role in DNA repair. It seems to be involved in an RecBC-independent recombinational process of DNA repair. It may act with RecF and RecO. The polypeptide is Recombination protein RecR (Leuconostoc citreum (strain KM20)).